The sequence spans 506 residues: MKEYQVYLERARSRQQDFLYPLIFREYIYGLAYSHNFNRSIFLENVGYGNKYSLLNVKRLITRMYQQNHLIISANDSNKNPFLGYNKNFDSQIISEGFAIVVEIPFFLQLSSSLEEAEVIKSYKNVRSIHSIFPFLEDKFTYLNYVSDIQIPYPIHLEILVQILRYWVKDAPFFHLLRLFLYHFCNWNRFITTKKSISTFSKSNPRLFLFLYNFYVCEYESIFLFLRNKSSHLRLKSFSVFFERIFFYAKREHLVEVFAKDFSYTLPLFKDPNIHYVRYQGKCILASKNAPFLMKKWKHYFIHLWQCFFDVWSQPRTININQLSEHSFRLLGYFSNVRLNRSAVRSQMLQNTFLIEIVSKKLDIIVPIIPLIRSLAKAKFCNVLGHPISKPVWADSSDFDIIERFLRICRNLSHYYNGSSKKKSLYRIKYILRLSCIKTLACKHKSTVRAFLKRSGSEELLEEFFTEEEEILSLIFPRDSFTLHRFHRNRIWYLDILFSNDLVNDE.

Belongs to the intron maturase 2 family. MatK subfamily.

The protein resides in the plastid. It is found in the chloroplast. Functionally, usually encoded in the trnK tRNA gene intron. Probably assists in splicing its own and other chloroplast group II introns. The protein is Maturase K of Trifolium lupinaster (Lupine clover).